Consider the following 84-residue polypeptide: CDC42 small effector protein 2 (84 aa).

Residues Cys-10 and Cys-11 are each lipidated (S-palmitoyl cysteine). Residues 29-42 (IGEPTNFVHTAHVG) form the CRIB domain. 2 positions are modified to phosphoserine: Ser-43 and Ser-52.

The protein belongs to the CDC42SE/SPEC family. Interacts with CDC42 (in GTP-bound form). Interacts weakly with RAC1 and not at all with RHOA.

Its subcellular location is the cytoplasm. It localises to the cytoskeleton. It is found in the cell membrane. The protein resides in the cell projection. The protein localises to the phagocytic cup. Functionally, probably involved in the organization of the actin cytoskeleton by acting downstream of CDC42, inducing actin filament assembly. Alters CDC42-induced cell shape changes. In activated T-cells, may play a role in CDC42-mediated F-actin accumulation at the immunological synapse. May play a role in early contractile events in phagocytosis in macrophages. This Bos taurus (Bovine) protein is CDC42 small effector protein 2 (CDC42SE2).